The chain runs to 268 residues: Phosphatidylglycerol--prolipoprotein diacylglyceryl transferase (268 aa).

3 helical membrane-spanning segments follow: residues 25–45, 57–77, and 93–113; these read WYGVFFALSFLCGLYLMTKVF, YLFYYMIAGTVIGARLGHCFF, and VWHGGLASHGGVLGILTAVYF. Position 142 (Arg142) interacts with a 1,2-diacyl-sn-glycero-3-phospho-(1'-sn-glycerol). The next 4 membrane-spanning stretches (helical) occupy residues 151-171, 175-195, 204-224, and 236-256; these read IIGIPTDVSWAFIFARVDLLP, VQLYESIVYFLIFGFLMLAYW, GLLLGTILTSVFSARFLLEFF, and PLSVGQWLSIPAVIIGVLLIF.

This sequence belongs to the Lgt family.

The protein resides in the cell inner membrane. The enzyme catalyses L-cysteinyl-[prolipoprotein] + a 1,2-diacyl-sn-glycero-3-phospho-(1'-sn-glycerol) = an S-1,2-diacyl-sn-glyceryl-L-cysteinyl-[prolipoprotein] + sn-glycerol 1-phosphate + H(+). The protein operates within protein modification; lipoprotein biosynthesis (diacylglyceryl transfer). Catalyzes the transfer of the diacylglyceryl group from phosphatidylglycerol to the sulfhydryl group of the N-terminal cysteine of a prolipoprotein, the first step in the formation of mature lipoproteins. This Chloroherpeton thalassium (strain ATCC 35110 / GB-78) protein is Phosphatidylglycerol--prolipoprotein diacylglyceryl transferase.